A 182-amino-acid chain; its full sequence is Flagellar transcriptional regulator FlhC (182 aa).

Zn(2+) contacts are provided by C138, C141, C158, and C161.

This sequence belongs to the FlhC family. In terms of assembly, heterohexamer composed of two FlhC and four FlhD subunits. Each FlhC binds a FlhD dimer, forming a heterotrimer, and a hexamer assembles by dimerization of two heterotrimers. Requires Zn(2+) as cofactor.

It is found in the cytoplasm. In terms of biological role, functions in complex with FlhD as a master transcriptional regulator that regulates transcription of several flagellar and non-flagellar operons by binding to their promoter region. Activates expression of class 2 flagellar genes, including fliA, which is a flagellum-specific sigma factor that turns on the class 3 genes. Also regulates genes whose products function in a variety of physiological pathways. The protein is Flagellar transcriptional regulator FlhC of Gallionella capsiferriformans (strain ES-2) (Gallionella ferruginea capsiferriformans (strain ES-2)).